An 896-amino-acid chain; its full sequence is Zinc finger protein 574 (896 aa).

2 consecutive C2H2-type zinc fingers follow at residues 16-38 (YVCSECNQLYGSLEEVLMHQNSH) and 76-98 (YQCLECGQLLMSPSQLLEHQELH). Position 113 is a phosphoserine (S113). The C2H2-type 3 zinc finger occupies 126–148 (YECVDCKALFASQELWLNHRQTH). S164 carries the phosphoserine modification. The segment at 214-236 (YKCSECSQLFQLPADFLEHQATH) adopts a C2H2-type 4 zinc-finger fold. Positions 239-301 (APVPESQEPA…RARRNNSGEA (63 aa)) are disordered. The segment covering 247–257 (PALQQEVQASS) has biased composition (polar residues). A compositionally biased stretch (basic and acidic residues) spans 274–287 (HSYELRNGEAIGRD). S298 carries the post-translational modification Phosphoserine. C2H2-type zinc fingers lie at residues 309–331 (LFCSACDQLFLSPHQLQQHLRSH), 336–358 (FKCPLCSRVFPSPSSLDQHLGDH), 364–386 (FLCVDCGLAFGTEALLLAHRRAH), and 392–413 (HSCPCGKTFVNLTKFLYHRRTH). The tract at residues 434 to 460 (FPEPAPAETGEPEAPEPPVSEETSAGP) is disordered. The C2H2-type 9 zinc-finger motif lies at 466-489 (YRCLLCSREFGKALQLTRHQRFVH). A C2H2-type 10; degenerate zinc finger spans residues 495–517 (HKCSICGKMFKKKSHVRNHLRTH). 4 C2H2-type zinc fingers span residues 523-545 (FPCPDCSKPFNSPANLARHRLTH), 551-573 (YRCGDCGKAFTQSSTLRQHRLVH), 579-601 (YRCQECGVRFHRPYRLLMHRYHH), and 607-630 (YKCRECPRSFLLRRLLEVHQLVVH). The C2H2-type 15; degenerate zinc-finger motif lies at 636–659 (HRCPSCGAAFPSSLRLREHRCAAA). A C2H2-type 16 zinc finger spans residues 667–689 (FECGTCGKKVGSAARLQAHEAAH). The tract at residues 687–733 (AAHAAAGPGEVLAKEPPAPRAPRATRAPVASPAALGSTATASPAAPA) is disordered. The span at 707 to 732 (APRATRAPVASPAALGSTATASPAAP) shows a compositional bias: low complexity. The residue at position 717 (S717) is a Phosphoserine. The residue at position 724 (T724) is a Phosphothreonine. S728 carries the post-translational modification Phosphoserine. C2H2-type zinc fingers lie at residues 738–760 (LECSECKKLFSTETSLQVHRRIH), 766–788 (YPCPDCGKAFRQSTHLKDHRRLH), 794–816 (FACEVCGKAFAISMRLAEHRRIH), and 822–844 (YSCPDCGKSYRSFSNLWKHRKTH). R832 carries the post-translational modification Asymmetric dimethylarginine.

This sequence belongs to the krueppel C2H2-type zinc-finger protein family.

The protein localises to the nucleus. May be involved in transcriptional regulation. This Homo sapiens (Human) protein is Zinc finger protein 574 (ZNF574).